Reading from the N-terminus, the 201-residue chain is Akirin-2 (201 aa).

S18 and S21 each carry phosphoserine. Residues 22–27 (PKRRRC) carry the Nuclear localization signal motif. S55 is modified (phosphoserine). The SYVS motif signature appears at 198 to 201 (SYVS).

This sequence belongs to the akirin family. In terms of assembly, homodimer. Interacts with IPO9; the interaction is direct. Associates with 20S and 26S proteasomes. Interacts with SMARCD1; promoting SWI/SNF complex recruitment. Interacts with NFKBIZ. Interacts with YWHAB. In terms of processing, polyubiquitinated. Polyubiquitination is dependent of UBR5 that extends pre-ubiquitinated AKIRIN2. As to expression, highly expressed in testis, cerebrum and cerebellum, and barely detectable in liver, heart, spleen and muscle. Also highly expressed in various tumor cells from hepatoma, glioblastoma and pheochromocytoma.

The protein localises to the nucleus. Its subcellular location is the cytoplasm. The protein resides in the membrane. Functionally, molecular adapter that acts as a bridge between a variety of multiprotein complexes, and which is involved in embryonic development, immunity, myogenesis and brain development. Plays a key role in nuclear protein degradation by promoting import of proteasomes into the nucleus: directly binds to fully assembled 20S proteasomes at one end and to nuclear import receptor IPO9 at the other end, bridging them together and mediating the import of pre-assembled proteasome complexes through the nuclear pore. Involved in innate immunity by regulating the production of interleukin-6 (IL6) downstream of Toll-like receptor (TLR): acts by bridging the NF-kappa-B inhibitor NFKBIZ and the SWI/SNF complex, leading to promote induction of IL6. Also involved in adaptive immunity by promoting B-cell activation. Involved in brain development: required for the survival and proliferation of cerebral cortical progenitor cells. Involved in myogenesis: required for skeletal muscle formation and skeletal development, possibly by regulating expression of muscle differentiation factors. Also plays a role in facilitating interdigital tissue regression during limb development. This chain is Akirin-2, found in Rattus norvegicus (Rat).